The primary structure comprises 262 residues: MSDALIRLDKVAVTLSGQNVLDDIQLSVKPGEIVTLIGPNGAGKTTLVRAVLGLLKPDSGTVWRKPKLRVGYMPQKLHVDQTLPLSVLRFLRLVPGVDRTAAASALEEVGAGKVIDSPIQGISGGEMQRVLLARALLRKPELLVLDEPVQGVDVAGQAELYSLITRLRDRHRCGVLMVSHDLHLVMSTTDQVVCLNRHVCCSGHPEQVSHDPAFVELFGKNAQSLAIYHHHHDHAHDLHGAVVNDAAPLSHTHVHGDSCKHG.

The 216-residue stretch at 6–221 folds into the ABC transporter domain; sequence IRLDKVAVTL…PAFVELFGKN (216 aa). ATP is bound at residue 38–45; the sequence is GPNGAGKT.

It belongs to the ABC transporter superfamily. Zinc importer (TC 3.A.1.15.5) family. The complex is composed of two ATP-binding proteins (ZnuC), two transmembrane proteins (ZnuB) and a solute-binding protein (ZnuA).

It is found in the cell inner membrane. The catalysed reaction is Zn(2+)(out) + ATP(in) + H2O(in) = Zn(2+)(in) + ADP(in) + phosphate(in) + H(+)(in). Its function is as follows. Part of the ABC transporter complex ZnuABC involved in zinc import. Responsible for energy coupling to the transport system. This chain is Zinc import ATP-binding protein ZnuC, found in Pseudomonas syringae pv. syringae (strain B728a).